Reading from the N-terminus, the 707-residue chain is Tryptophan synthase (707 aa).

The tryptophan synthase alpha chain stretch occupies residues 1 to 297 (MSEQLRQTFA…VKKEILDEFD (297 aa)). Catalysis depends on proton acceptor residues Glu-50 and Asp-61. Positions 298-707 (ENHKHPIRFG…DLRFEEDPSA (410 aa)) are tryptophan synthase beta chain. Position 384 is an N6-(pyridoxal phosphate)lysine (Lys-384). Ser-540 and Ser-683 each carry phosphoserine.

This sequence in the N-terminal section; belongs to the TrpA family. In the C-terminal section; belongs to the TrpB family. It depends on pyridoxal 5'-phosphate as a cofactor.

It carries out the reaction (1S,2R)-1-C-(indol-3-yl)glycerol 3-phosphate + L-serine = D-glyceraldehyde 3-phosphate + L-tryptophan + H2O. The protein operates within amino-acid biosynthesis; L-tryptophan biosynthesis; L-tryptophan from chorismate: step 5/5. The polypeptide is Tryptophan synthase (TRP5) (Saccharomyces cerevisiae (strain ATCC 204508 / S288c) (Baker's yeast)).